Consider the following 202-residue polypeptide: Glycerol-3-phosphate acyltransferase (202 aa).

Transmembrane regions (helical) follow at residues 2–22, 54–74, 85–105, 118–138, 140–160, and 162–182; these read MIVL…GVII, FVVT…PLLF, FFTN…YPIF, AGVV…IFFL, LYLT…CVIG, and LIIH…LLIF.

This sequence belongs to the PlsY family. Probably interacts with PlsX.

The protein localises to the cell membrane. It carries out the reaction an acyl phosphate + sn-glycerol 3-phosphate = a 1-acyl-sn-glycero-3-phosphate + phosphate. It participates in lipid metabolism; phospholipid metabolism. Functionally, catalyzes the transfer of an acyl group from acyl-phosphate (acyl-PO(4)) to glycerol-3-phosphate (G3P) to form lysophosphatidic acid (LPA). This enzyme utilizes acyl-phosphate as fatty acyl donor, but not acyl-CoA or acyl-ACP. This Staphylococcus carnosus (strain TM300) protein is Glycerol-3-phosphate acyltransferase.